The chain runs to 299 residues: 11-beta-hydroxysteroid dehydrogenase-like 4A (299 aa).

The chain crosses the membrane as a helical; Signal-anchor for type II membrane protein span at residues Ile-10–Phe-30. Residues Gly-54–Arg-80 and Asp-105 contribute to the NADP(+) site. Ser-184 is a substrate binding site. Tyr-197 acts as the Proton acceptor in catalysis. Residues Tyr-197 to Lys-201 and Lys-201 contribute to the NADP(+) site.

This sequence belongs to the short-chain dehydrogenases/reductases (SDR) family.

Its subcellular location is the membrane. The protein is 11-beta-hydroxysteroid dehydrogenase-like 4A (HSD4) of Arabidopsis thaliana (Mouse-ear cress).